A 334-amino-acid polypeptide reads, in one-letter code: Holliday junction branch migration complex subunit RuvB (334 aa).

The interval 4–184 (EDRLISGTQK…FGIVQRLEYY (181 aa)) is large ATPase domain (RuvB-L). ATP contacts are provided by residues Ile-23, Arg-24, Gly-65, Lys-68, Thr-69, Thr-70, 131–133 (EDY), Arg-174, Tyr-184, and Arg-221. A Mg(2+)-binding site is contributed by Thr-69. Residues 185 to 255 (DLKSLTRIVL…VAKLALDMLE (71 aa)) are small ATPAse domain (RuvB-S). Positions 258-334 (NEGFDYMDRK…YLHFGFDKPQ (77 aa)) are head domain (RuvB-H). DNA is bound by residues Arg-313 and Arg-318.

Belongs to the RuvB family. As to quaternary structure, homohexamer. Forms an RuvA(8)-RuvB(12)-Holliday junction (HJ) complex. HJ DNA is sandwiched between 2 RuvA tetramers; dsDNA enters through RuvA and exits via RuvB. An RuvB hexamer assembles on each DNA strand where it exits the tetramer. Each RuvB hexamer is contacted by two RuvA subunits (via domain III) on 2 adjacent RuvB subunits; this complex drives branch migration. In the full resolvosome a probable DNA-RuvA(4)-RuvB(12)-RuvC(2) complex forms which resolves the HJ.

The protein localises to the cytoplasm. The enzyme catalyses ATP + H2O = ADP + phosphate + H(+). Its function is as follows. The RuvA-RuvB-RuvC complex processes Holliday junction (HJ) DNA during genetic recombination and DNA repair, while the RuvA-RuvB complex plays an important role in the rescue of blocked DNA replication forks via replication fork reversal (RFR). RuvA specifically binds to HJ cruciform DNA, conferring on it an open structure. The RuvB hexamer acts as an ATP-dependent pump, pulling dsDNA into and through the RuvAB complex. RuvB forms 2 homohexamers on either side of HJ DNA bound by 1 or 2 RuvA tetramers; 4 subunits per hexamer contact DNA at a time. Coordinated motions by a converter formed by DNA-disengaged RuvB subunits stimulates ATP hydrolysis and nucleotide exchange. Immobilization of the converter enables RuvB to convert the ATP-contained energy into a lever motion, pulling 2 nucleotides of DNA out of the RuvA tetramer per ATP hydrolyzed, thus driving DNA branch migration. The RuvB motors rotate together with the DNA substrate, which together with the progressing nucleotide cycle form the mechanistic basis for DNA recombination by continuous HJ branch migration. Branch migration allows RuvC to scan DNA until it finds its consensus sequence, where it cleaves and resolves cruciform DNA. This chain is Holliday junction branch migration complex subunit RuvB, found in Psychromonas ingrahamii (strain DSM 17664 / CCUG 51855 / 37).